The chain runs to 122 residues: Acidic phospholipase A2 (122 aa).

Disulfide bonds link Cys26-Cys115, Cys28-Cys44, Cys43-Cys95, Cys49-Cys122, Cys50-Cys88, Cys57-Cys81, and Cys75-Cys86. Tyr27, Gly29, and Gly31 together coordinate Ca(2+). His47 is an active-site residue. Asp48 contacts Ca(2+). The active site involves Asp89.

The protein belongs to the phospholipase A2 family. Group II subfamily. D49 sub-subfamily. As to quaternary structure, monomer. The cofactor is Ca(2+). In terms of tissue distribution, expressed by the venom gland.

Its subcellular location is the secreted. The enzyme catalyses a 1,2-diacyl-sn-glycero-3-phosphocholine + H2O = a 1-acyl-sn-glycero-3-phosphocholine + a fatty acid + H(+). PLA2 catalyzes the calcium-dependent hydrolysis of the 2-acyl groups in 3-sn-phosphoglycerides. The protein is Acidic phospholipase A2 of Gloydius blomhoffii (Mamushi).